The chain runs to 1128 residues: Glutamate receptor-interacting protein 1 (1128 aa).

Position 43 is a phosphoserine (Ser43). PDZ domains are found at residues 53–136 (VVEL…EYEL), 150–238 (TVEV…EYDV), 252–336 (LVEV…LPHH), 472–561 (EVVL…EFDV), 573–658 (HVKL…RKDE), and 673–755 (TVEL…KKQT). 2 disordered regions span residues 754-798 (QTDA…YPST) and 935-981 (MSLN…GRKS). The span at 944 to 974 (PRSQLGRQASFQERSSSRPHYSQTTRSNTLP) shows a compositional bias: polar residues. The 83-residue stretch at 1004 to 1086 (KVTLYKDSDM…KLDLVISRNP (83 aa)) folds into the PDZ 7 domain. Residues 1093–1115 (IDQQSLPGDWSEQNSAFFQQPSH) are compositionally biased toward polar residues. Residues 1093–1128 (IDQQSLPGDWSEQNSAFFQQPSHGGNLETREPTNTL) are disordered.

Interacts with EPHA7, EPHB2, KIF5A, KIF5B, KIF5C, GRIA2, GRIA3, GRIPAP1/GRASP1, PPFIA1, PPFIA4, FRAS1, PLCD4, PTPRF and liprins-alpha. Can form homomultimers or heteromultimers with GRIP2. Forms a ternary complex with GRIA2 and CSPG4. Interacts with ATAD1 in an ATP-dependent manner. ATAD1-catalyzed ATP hydrolysis disrupts binding to ATAD1 and to GRIA2 and leads to AMPAR complex disassembly. Interacts with EFNB1, EFNB3 and the C-terminal tail of PRLHR. Interacts with SLC30A9. Interacts with BUD23. Forms a complex with NSG1, GRIA2 and STX12; controls the intracellular fate of AMPAR and the endosomal sorting of the GRIA2 subunit toward recycling and membrane targeting. Interacts with NSG1.

Its subcellular location is the cytoplasmic vesicle. It is found in the perikaryon. The protein resides in the cell projection. It localises to the dendrite. The protein localises to the cytoplasm. Its subcellular location is the endomembrane system. It is found in the postsynaptic cell membrane. The protein resides in the postsynaptic density. It localises to the endoplasmic reticulum membrane. Functionally, may play a role as a localized scaffold for the assembly of a multiprotein signaling complex and as mediator of the trafficking of its binding partners at specific subcellular location in neurons. Through complex formation with NSG1, GRIA2 and STX12 controls the intracellular fate of AMPAR and the endosomal sorting of the GRIA2 subunit toward recycling and membrane targeting. The chain is Glutamate receptor-interacting protein 1 (GRIP1) from Homo sapiens (Human).